A 209-amino-acid chain; its full sequence is Small ribosomal subunit protein uS4 (209 aa).

The interval 22–45 (RGRNPLLRKPNPPGQHGMQRKKKS) is disordered. Residues 93–154 (CRLDNIVYRL…KSKRLAIVTE (62 aa)) form the S4 RNA-binding domain.

It belongs to the universal ribosomal protein uS4 family. In terms of assembly, part of the 30S ribosomal subunit. Contacts protein S5. The interaction surface between S4 and S5 is involved in control of translational fidelity.

In terms of biological role, one of the primary rRNA binding proteins, it binds directly to 16S rRNA where it nucleates assembly of the body of the 30S subunit. With S5 and S12 plays an important role in translational accuracy. This chain is Small ribosomal subunit protein uS4, found in Chlamydia trachomatis serovar A (strain ATCC VR-571B / DSM 19440 / HAR-13).